Reading from the N-terminus, the 447-residue chain is ATP-dependent protease ATPase subunit HslU (447 aa).

Residues I17, 59–64 (GVGKTE), D256, E321, and R393 each bind ATP.

Belongs to the ClpX chaperone family. HslU subfamily. A double ring-shaped homohexamer of HslV is capped on each side by a ring-shaped HslU homohexamer. The assembly of the HslU/HslV complex is dependent on binding of ATP.

Its subcellular location is the cytoplasm. Functionally, ATPase subunit of a proteasome-like degradation complex; this subunit has chaperone activity. The binding of ATP and its subsequent hydrolysis by HslU are essential for unfolding of protein substrates subsequently hydrolyzed by HslV. HslU recognizes the N-terminal part of its protein substrates and unfolds these before they are guided to HslV for hydrolysis. This is ATP-dependent protease ATPase subunit HslU from Pseudomonas entomophila (strain L48).